A 528-amino-acid chain; its full sequence is DnaJ homolog 1, mitochondrial (528 aa).

A mitochondrion-targeting transit peptide spans 1-66 (MFSKYLQSRV…REFSRCAALK (66 aa)). The J domain maps to 86-150 (DPYKTLGVSK…KKKKAFDTYG (65 aa)). A CR-type zinc finger spans residues 227–308 (GAKKDLSYSV…CMGSGTVRER (82 aa)). CXXCXGXG motif repeat units follow at residues 240-247 (CSSCHGSG), 257-264 (CFACKGTG), 280-287 (CDSCGGTG), and 296-303 (CRSCMGSG). A disordered region spans residues 455–528 (NDSTARRTQS…QNPKKDESSS (74 aa)). Positions 462–488 (TQSSPSGTNSSTSTSSTSSKHSTGIST) are enriched in low complexity. Residues 513–528 (LHPDEDQNPKKDESSS) show a composition bias toward basic and acidic residues.

The protein localises to the mitochondrion. The protein is DnaJ homolog 1, mitochondrial (mdj1) of Schizosaccharomyces pombe (strain 972 / ATCC 24843) (Fission yeast).